The chain runs to 349 residues: Phosphoribosylformylglycinamidine cyclo-ligase (349 aa).

Belongs to the AIR synthase family.

It is found in the cytoplasm. It carries out the reaction 2-formamido-N(1)-(5-O-phospho-beta-D-ribosyl)acetamidine + ATP = 5-amino-1-(5-phospho-beta-D-ribosyl)imidazole + ADP + phosphate + H(+). It participates in purine metabolism; IMP biosynthesis via de novo pathway; 5-amino-1-(5-phospho-D-ribosyl)imidazole from N(2)-formyl-N(1)-(5-phospho-D-ribosyl)glycinamide: step 2/2. This Lactobacillus delbrueckii subsp. bulgaricus (strain ATCC BAA-365 / Lb-18) protein is Phosphoribosylformylglycinamidine cyclo-ligase.